A 722-amino-acid polypeptide reads, in one-letter code: Exocyst complex component 3-like protein 4 (722 aa).

Disordered regions lie at residues 1 to 53 (MPSP…LGSL) and 92 to 131 (NDGP…KPEA). The segment covering 34–46 (SRKEPNAHRKDGT) has biased composition (basic and acidic residues). Position 52 is a phosphoserine (S52). A compositionally biased stretch (polar residues) spans 113-122 (GVSQQASTGA). S513 bears the Phosphoserine mark.

This sequence belongs to the SEC6 family.

This Homo sapiens (Human) protein is Exocyst complex component 3-like protein 4 (EXOC3L4).